The chain runs to 719 residues: Protein ENHANCED DISEASE RESISTANCE 2-like (719 aa).

The PH domain maps to 3–110 (KVVYEGWMVR…WKEKIECVID (108 aa)). The segment at 134 to 173 (AGRTASSSDHESPFSALEDENDSQRDLLRRTTIGNGPPES) is disordered. The START domain maps to 180–392 (EFDAELSNQS…VSGLREWFSQ (213 aa)). Residues 414–478 (ALGKGGKHHH…ETDAKKTEEP (65 aa)) are disordered. Polar residues predominate over residues 426–439 (SLSIDQTNGASRNS). Residues 442-461 (MDEDSDDDDEFQIPDSEPEP) are compositionally biased toward acidic residues. Positions 462 to 477 (ETSKQDQETDAKKTEE) are enriched in basic and acidic residues. The helical transmembrane segment at 665–685 (GVLGLVIGVITSLVVEMAFLV) threads the bilayer.

The protein resides in the endoplasmic reticulum membrane. Its subcellular location is the cell membrane. It localises to the endosome membrane. Binds to phosphatidylinositol-4-phosphate (PtdIns(4)P). May regulate the salicylic acid- (SA-) mediated resistance to pathogens. In Arabidopsis thaliana (Mouse-ear cress), this protein is Protein ENHANCED DISEASE RESISTANCE 2-like (EDR2L).